A 331-amino-acid polypeptide reads, in one-letter code: Phosphoribosylformylglycinamidine cyclo-ligase (331 aa).

This sequence belongs to the AIR synthase family.

It is found in the cytoplasm. The enzyme catalyses 2-formamido-N(1)-(5-O-phospho-beta-D-ribosyl)acetamidine + ATP = 5-amino-1-(5-phospho-beta-D-ribosyl)imidazole + ADP + phosphate + H(+). The protein operates within purine metabolism; IMP biosynthesis via de novo pathway; 5-amino-1-(5-phospho-D-ribosyl)imidazole from N(2)-formyl-N(1)-(5-phospho-D-ribosyl)glycinamide: step 2/2. This chain is Phosphoribosylformylglycinamidine cyclo-ligase, found in Clostridium tetani (strain Massachusetts / E88).